The primary structure comprises 62 residues: Small ribosomal subunit protein eS27 (62 aa).

Zn(2+) contacts are provided by Cys17, Cys20, Cys36, and Cys39. Residues 17–39 (CPDCENEQTIFDRACTPVDCIVC) form a C4-type zinc finger.

It belongs to the eukaryotic ribosomal protein eS27 family. In terms of assembly, part of the 30S ribosomal subunit. It depends on Zn(2+) as a cofactor.

This Methanospirillum hungatei JF-1 (strain ATCC 27890 / DSM 864 / NBRC 100397 / JF-1) protein is Small ribosomal subunit protein eS27.